We begin with the raw amino-acid sequence, 89 residues long: Small ribosomal subunit protein uS14A (89 aa).

It belongs to the universal ribosomal protein uS14 family. As to quaternary structure, part of the 30S ribosomal subunit. Contacts proteins S3 and S10.

Its function is as follows. Binds 16S rRNA, required for the assembly of 30S particles and may also be responsible for determining the conformation of the 16S rRNA at the A site. This is Small ribosomal subunit protein uS14A from Staphylococcus haemolyticus (strain JCSC1435).